The primary structure comprises 382 residues: Galactokinase (382 aa).

34-37 (EHTD) is a binding site for substrate. 124–130 (GAGLSSS) contributes to the ATP binding site. 2 residues coordinate Mg(2+): Ser130 and Glu162. The active-site Proton acceptor is the Asp174. Residue Tyr223 coordinates substrate.

This sequence belongs to the GHMP kinase family. GalK subfamily.

It is found in the cytoplasm. The enzyme catalyses alpha-D-galactose + ATP = alpha-D-galactose 1-phosphate + ADP + H(+). It functions in the pathway carbohydrate metabolism; galactose metabolism. Catalyzes the transfer of the gamma-phosphate of ATP to D-galactose to form alpha-D-galactose-1-phosphate (Gal-1-P). This is Galactokinase from Escherichia coli O9:H4 (strain HS).